We begin with the raw amino-acid sequence, 885 residues long: Cadherin-1 (885 aa).

Positions 1 to 26 are cleaved as a signal peptide; sequence MGPRYGGAPALLLPLLLLLQVSSGLC. The propeptide occupies 27–156; sequence QEPEPCRPGF…SQHGLRRQKR (130 aa). Over residues 121–131 the composition is skewed to basic residues; that stretch reads KAATHHHHHHH. Residues 121 to 141 are disordered; it reads KAATHHHHHHHDAPSKTQTEV. Residues 157-712 are Extracellular-facing; it reads DWVIPPISCP…YAEAGLQVPA (556 aa). 5 Cadherin domains span residues 158–264, 265–377, 378–488, 489–597, and 607–688; these read WVIP…KPEF, TQAV…PPIF, NPTT…APIF, IPCP…GPIP, and KNPQ…VFVC. Position 259 (D259) interacts with Ca(2+). O-linked (Man...) serine glycosylation is present at S282. T287 is a glycosylation site (O-linked (Man...) threonine). A Ca(2+)-binding site is contributed by D290. T360, T472, T474, and T511 each carry an O-linked (Man...) threonine glycan. N560 carries an N-linked (GlcNAc...) asparagine glycan. O-linked (Man...) threonine glycosylation is found at T578, T580, and T582. An N-linked (GlcNAc...) asparagine glycan is attached at N639. Residues 713 to 733 traverse the membrane as a helical segment; the sequence is ILGILGGILALLILILLLLLF. Residues 734-885 are Cytoplasmic-facing; sequence VRRRRVVKEP…ADMYGGGEDD (152 aa). The segment at 750 to 770 is disordered; it reads DTRDNVYYYDEEGGGEEDQDF. Phosphotyrosine; by SRC occurs at positions 756, 757, and 758. Acidic residues predominate over residues 758–770; the sequence is YDEEGGGEEDQDF. The interval 761–772 is required for binding CTNND1 and PSEN1; sequence EGGGEEDQDFDL. 5 positions are modified to phosphoserine: S773, S796, S841, S843, and S849. A disordered region spans residues 792–811; the sequence is PTLLSVPQYRPRPANPDEIG. A required for binding alpha, beta and gamma catenins region spans residues 814–885; the sequence is IDENLKAADT…ADMYGGGEDD (72 aa).

In terms of assembly, homodimer; disulfide-linked. Component of an E-cadherin/ catenin adhesion complex composed of at least E-cadherin/CDH1, beta-catenin/CTNNB1 or gamma-catenin/JUP, and potentially alpha-catenin/CTNNA1; the complex is located to adherens junctions. Found in a complex composed of CDH1, RAP1A and PKP3; PKP3 acts as a scaffold protein within the complex, the complex is required for CDH1 localization to mature desmosome cell junctions. Interacts with the TRPV4 and CTNNB1 complex. Interacts with CTNND1. The stable association of CTNNA1 is controversial as CTNNA1 was shown not to bind to F-actin when assembled in the complex. Alternatively, the CTNNA1-containing complex may be linked to F-actin by other proteins such as LIMA1. Interaction with PSEN1, cleaves CDH1 resulting in the disassociation of cadherin-based adherens junctions (CAJs). Interacts with AJAP1 and DLGAP5. Interacts with TBC1D2. Interacts with LIMA1. Interacts with CAV1. Interacts with PIP5K1C. Interacts with RAB8B. Interacts with DDR1; this stabilizes CDH1 at the cell surface and inhibits its internalization. Interacts with RAPGEF2. Interacts with KLRG1. Forms a ternary complex composed of ADAM10, CADH1 and EPHA4; within the complex, CADH1 is cleaved by ADAM10 which disrupts adherens junctions. Interacts with SPEF1. Interacts with CTNNB1 and PKP2. Interacts with AMOTL2; the interaction may facilitate binding of radial actin fibers to cell junction complexes. Interacts with DSG3; the interaction is required for CDH1 localization to developing adherens junctions. In terms of processing, during apoptosis or with calcium influx, cleaved by a membrane-bound metalloproteinase (ADAM10), PS1/gamma-secretase and caspase-3. Processing by the metalloproteinase, induced by calcium influx, causes disruption of cell-cell adhesion and the subsequent release of beta-catenin into the cytoplasm. The residual membrane-tethered cleavage product is rapidly degraded via an intracellular proteolytic pathway. Cleavage by caspase-3 releases the cytoplasmic tail resulting in disintegration of the actin microfilament system. The gamma-secretase-mediated cleavage promotes disassembly of adherens junctions. During development of the cochlear organ of Corti, cleavage by ADAM10 at adherens junctions promotes pillar cell separation. N-glycosylation at Asn-639 is essential for expression, folding and trafficking. Addition of bisecting N-acetylglucosamine by MGAT3 modulates its cell membrane location. Post-translationally, ubiquitinated by a SCF complex containing SKP2, which requires prior phosphorylation by CK1/CSNK1A1. Ubiquitinated by CBLL1/HAKAI, requires prior phosphorylation at Tyr-757. In terms of processing, O-glycosylated. O-manosylated by TMTC1, TMTC2, TMTC3 or TMTC4. Thr-287 and Thr-511 are O-mannosylated by TMTC2 or TMTC4 but not TMTC1 or TMTC3.

It localises to the cell junction. Its subcellular location is the adherens junction. It is found in the cell membrane. The protein localises to the endosome. The protein resides in the golgi apparatus. It localises to the trans-Golgi network. Its subcellular location is the cytoplasm. It is found in the desmosome. In terms of biological role, cadherins are calcium-dependent cell adhesion proteins. They preferentially interact with themselves in a homophilic manner in connecting cells; cadherins may thus contribute to the sorting of heterogeneous cell types. CDH1 is involved in mechanisms regulating cell-cell adhesions, mobility and proliferation of epithelial cells. Promotes organization of radial actin fiber structure and cellular response to contractile forces, via its interaction with AMOTL2 which facilitates anchoring of radial actin fibers to CDH1 junction complexes at the cell membrane. Plays a role in the early stages of desmosome cell-cell junction formation via facilitating the recruitment of DSG2 and DSP to desmosome plaques. Has a potent invasive suppressor role. It is a ligand for integrin alpha-E/beta-7. Functionally, E-Cad/CTF2 promotes non-amyloidogenic degradation of Abeta precursors. Has a strong inhibitory effect on APP C99 and C83 production. The protein is Cadherin-1 (CDH1) of Canis lupus familiaris (Dog).